A 475-amino-acid polypeptide reads, in one-letter code: Glycogen synthase (475 aa).

Residue K15 participates in ADP-alpha-D-glucose binding.

Belongs to the glycosyltransferase 1 family. Bacterial/plant glycogen synthase subfamily.

It carries out the reaction [(1-&gt;4)-alpha-D-glucosyl](n) + ADP-alpha-D-glucose = [(1-&gt;4)-alpha-D-glucosyl](n+1) + ADP + H(+). It functions in the pathway glycan biosynthesis; glycogen biosynthesis. Functionally, synthesizes alpha-1,4-glucan chains using ADP-glucose. This chain is Glycogen synthase, found in Anaeromyxobacter sp. (strain Fw109-5).